Here is a 64-residue protein sequence, read N- to C-terminus: Potassium channel toxin kappa-KTx 4.1 (64 aa).

The signal sequence occupies residues 1–26; sequence MKSTLMTASLLILVVLFIIDYASVYA. Residues 27–38 constitute a propeptide that is removed on maturation; sequence EFIDGEISLERE. 2 disulfide bridges follow: cysteine 43/cysteine 61 and cysteine 47/cysteine 57.

Belongs to the short scorpion toxin superfamily. Potassium channel inhibitor kappa-KTx family. Kappa-KTx 4 subfamily. In terms of tissue distribution, expressed by the venom gland.

The protein resides in the secreted. In terms of biological role, potassium channel inhibitor (Kv). The polypeptide is Potassium channel toxin kappa-KTx 4.1 (Heterometrus petersii (Asian forest scorpion)).